Reading from the N-terminus, the 201-residue chain is Small ribosomal subunit protein uS4c (201 aa).

The segment at 15–43 (LGALPGLTSKRPRSGSDLRNQSRSGKRSQ) is disordered. Positions 89–150 (MRLDNILFRL…KERSRALIQN (62 aa)) constitute an S4 RNA-binding domain.

Belongs to the universal ribosomal protein uS4 family. Part of the 30S ribosomal subunit. Contacts protein S5. The interaction surface between S4 and S5 is involved in control of translational fidelity.

It is found in the plastid. The protein resides in the chloroplast. Functionally, one of the primary rRNA binding proteins, it binds directly to 16S rRNA where it nucleates assembly of the body of the 30S subunit. Its function is as follows. With S5 and S12 plays an important role in translational accuracy. The sequence is that of Small ribosomal subunit protein uS4c (rps4) from Amborella trichopoda.